Consider the following 200-residue polypeptide: Pyridoxal 5'-phosphate synthase subunit PdxT (200 aa).

G52–S54 serves as a coordination point for L-glutamine. The active-site Nucleophile is the C84. L-glutamine is bound by residues R116 and I145 to R146. Catalysis depends on charge relay system residues H181 and E183.

The protein belongs to the glutaminase PdxT/SNO family. In the presence of PdxS, forms a dodecamer of heterodimers. Only shows activity in the heterodimer.

It carries out the reaction aldehydo-D-ribose 5-phosphate + D-glyceraldehyde 3-phosphate + L-glutamine = pyridoxal 5'-phosphate + L-glutamate + phosphate + 3 H2O + H(+). The enzyme catalyses L-glutamine + H2O = L-glutamate + NH4(+). It functions in the pathway cofactor biosynthesis; pyridoxal 5'-phosphate biosynthesis. Its function is as follows. Catalyzes the hydrolysis of glutamine to glutamate and ammonia as part of the biosynthesis of pyridoxal 5'-phosphate. The resulting ammonia molecule is channeled to the active site of PdxS. The protein is Pyridoxal 5'-phosphate synthase subunit PdxT of Saccharolobus islandicus (strain L.S.2.15 / Lassen #1) (Sulfolobus islandicus).